The primary structure comprises 107 residues: Nucleoid-associated protein GbCGDNIH1_0260 (107 aa).

The protein belongs to the YbaB/EbfC family. Homodimer.

The protein resides in the cytoplasm. Its subcellular location is the nucleoid. In terms of biological role, binds to DNA and alters its conformation. May be involved in regulation of gene expression, nucleoid organization and DNA protection. This chain is Nucleoid-associated protein GbCGDNIH1_0260, found in Granulibacter bethesdensis (strain ATCC BAA-1260 / CGDNIH1).